Here is a 601-residue protein sequence, read N- to C-terminus: COP9 signalosome complex subunit 1 (601 aa).

Residues 1-10 are compositionally biased toward acidic residues; sequence MQNELLDDPM. Disordered regions lie at residues 1-54 and 268-294; these read MQNE…LDNP and DADD…PYMV. The segment covering 14–24 has biased composition (low complexity); it reads APAAEAAAADE. The region spanning 338 to 500 is the PCI domain; that stretch reads TILQIKTECL…GIVRILDERD (163 aa). A disordered region spans residues 535–581; sequence SISDKETRPKRKNQKESAKFDRNFGGIDVDEDPRGIAGPSGLSDDFN.

It belongs to the CSN1 family. Component of the CSN complex, probably composed of csn-1, csn-2, csn-3, csn-4, csn-5, csn-6 and csn-7. Within the complex it probably interacts directly with csn-2, csn-4 and csn-5. May interact with itself. Interacts with rbx-1.

The protein resides in the cytoplasm. Its subcellular location is the nucleus. Essential component of the COP9 signalosome complex (CSN), a complex involved in various cellular and developmental processes. The CSN complex is an essential regulator of the ubiquitin (Ubl) conjugation pathway by mediating the deneddylation of the cullin subunits of the SCF-type E3 ligase complexes, leading to decrease the Ubl ligase activity of SCF. The CSN complex plays an essential role in embryogenesis and oogenesis and is required to regulate microtubule stability in the early embryo. Mediates mei-3/katanin targeting for degradation at the meiosis to mitosis transition via deneddylation of cul-3. This is COP9 signalosome complex subunit 1 (csn-1) from Caenorhabditis elegans.